The primary structure comprises 157 residues: 2-C-methyl-D-erythritol 2,4-cyclodiphosphate synthase (157 aa).

A divalent metal cation is bound by residues aspartate 8 and histidine 10. 4-CDP-2-C-methyl-D-erythritol 2-phosphate is bound by residues 8–10 (DVH) and 34–35 (HS). Position 42 (histidine 42) interacts with a divalent metal cation. 4-CDP-2-C-methyl-D-erythritol 2-phosphate contacts are provided by residues 56–58 (DIG), 61–65 (FPDTD), 100–106 (AQAPKMA), 132–135 (TTTE), phenylalanine 139, and arginine 142.

This sequence belongs to the IspF family. In terms of assembly, homotrimer. Requires a divalent metal cation as cofactor.

It catalyses the reaction 4-CDP-2-C-methyl-D-erythritol 2-phosphate = 2-C-methyl-D-erythritol 2,4-cyclic diphosphate + CMP. It participates in isoprenoid biosynthesis; isopentenyl diphosphate biosynthesis via DXP pathway; isopentenyl diphosphate from 1-deoxy-D-xylulose 5-phosphate: step 4/6. Its function is as follows. Involved in the biosynthesis of isopentenyl diphosphate (IPP) and dimethylallyl diphosphate (DMAPP), two major building blocks of isoprenoid compounds. Catalyzes the conversion of 4-diphosphocytidyl-2-C-methyl-D-erythritol 2-phosphate (CDP-ME2P) to 2-C-methyl-D-erythritol 2,4-cyclodiphosphate (ME-CPP) with a corresponding release of cytidine 5-monophosphate (CMP). In Pseudomonas putida (strain ATCC 700007 / DSM 6899 / JCM 31910 / BCRC 17059 / LMG 24140 / F1), this protein is 2-C-methyl-D-erythritol 2,4-cyclodiphosphate synthase.